The sequence spans 529 residues: Bifunctional purine biosynthesis protein PurH (529 aa).

One can recognise an MGS-like domain in the interval Met1–Val148.

This sequence belongs to the PurH family.

It carries out the reaction (6R)-10-formyltetrahydrofolate + 5-amino-1-(5-phospho-beta-D-ribosyl)imidazole-4-carboxamide = 5-formamido-1-(5-phospho-D-ribosyl)imidazole-4-carboxamide + (6S)-5,6,7,8-tetrahydrofolate. The enzyme catalyses IMP + H2O = 5-formamido-1-(5-phospho-D-ribosyl)imidazole-4-carboxamide. The protein operates within purine metabolism; IMP biosynthesis via de novo pathway; 5-formamido-1-(5-phospho-D-ribosyl)imidazole-4-carboxamide from 5-amino-1-(5-phospho-D-ribosyl)imidazole-4-carboxamide (10-formyl THF route): step 1/1. It participates in purine metabolism; IMP biosynthesis via de novo pathway; IMP from 5-formamido-1-(5-phospho-D-ribosyl)imidazole-4-carboxamide: step 1/1. This is Bifunctional purine biosynthesis protein PurH from Pectobacterium carotovorum subsp. carotovorum (strain PC1).